The sequence spans 446 residues: Putative diacyglycerol O-acyltransferase Rv3371 (446 aa).

Histidine 129 acts as the Proton acceptor in catalysis. Positions 425-446 are disordered; that stretch reads SRALPSAARRGRPSVPTARARH.

It belongs to the long-chain O-acyltransferase family.

It catalyses the reaction an acyl-CoA + a 1,2-diacyl-sn-glycerol = a triacyl-sn-glycerol + CoA. The catalysed reaction is di-(9Z)-octadecenoylglycerol + (9Z)-octadecenoyl-CoA = 1,2,3-tri-(9Z-octadecenoyl)-glycerol + CoA. Its pathway is glycerolipid metabolism; triacylglycerol biosynthesis. Catalyzes the terminal and only committed step in triacylglycerol synthesis by using diacylglycerol and fatty acyl CoA as substrates. Required for storage lipid synthesis. Its function is as follows. Upon expression in E.coli functions weakly as a triacylglycerol synthase, making triacylglycerol (TG) from diolein and long-chain fatty acyl-CoA. Has no wax synthase activity to produce wax esters. The protein is Putative diacyglycerol O-acyltransferase Rv3371 of Mycobacterium tuberculosis (strain ATCC 25618 / H37Rv).